The following is a 293-amino-acid chain: Formamidopyrimidine-DNA glycosylase (293 aa).

Proline 2 acts as the Schiff-base intermediate with DNA in catalysis. Glutamate 3 (proton donor) is an active-site residue. The active-site Proton donor; for beta-elimination activity is the lysine 61. 3 residues coordinate DNA: histidine 104, arginine 123, and lysine 169. The FPG-type zinc-finger motif lies at aspartate 255–proline 289. The active-site Proton donor; for delta-elimination activity is arginine 279.

It belongs to the FPG family. As to quaternary structure, monomer. Zn(2+) is required as a cofactor.

The enzyme catalyses Hydrolysis of DNA containing ring-opened 7-methylguanine residues, releasing 2,6-diamino-4-hydroxy-5-(N-methyl)formamidopyrimidine.. It catalyses the reaction 2'-deoxyribonucleotide-(2'-deoxyribose 5'-phosphate)-2'-deoxyribonucleotide-DNA = a 3'-end 2'-deoxyribonucleotide-(2,3-dehydro-2,3-deoxyribose 5'-phosphate)-DNA + a 5'-end 5'-phospho-2'-deoxyribonucleoside-DNA + H(+). In terms of biological role, involved in base excision repair of DNA damaged by oxidation or by mutagenic agents. Acts as a DNA glycosylase that recognizes and removes damaged bases. Has a preference for oxidized purines, such as 7,8-dihydro-8-oxoguanine (8-oxoG). Has AP (apurinic/apyrimidinic) lyase activity and introduces nicks in the DNA strand. Cleaves the DNA backbone by beta-delta elimination to generate a single-strand break at the site of the removed base with both 3'- and 5'-phosphates. The sequence is that of Formamidopyrimidine-DNA glycosylase from Mycolicibacterium vanbaalenii (strain DSM 7251 / JCM 13017 / BCRC 16820 / KCTC 9966 / NRRL B-24157 / PYR-1) (Mycobacterium vanbaalenii).